A 126-amino-acid chain; its full sequence is uncharacterized protein (126 aa).

Helical transmembrane passes span 40-57 (IDKWILGALAFVFAVSFF) and 72-94 (ILIAIGIFATFEIAIILAVILGG).

Its subcellular location is the cell membrane. This is an uncharacterized protein from Pasteurella multocida (strain Pm70).